Here is a 333-residue protein sequence, read N- to C-terminus: Dihydroorotate dehydrogenase (quinone) (333 aa).

FMN is bound by residues 56–60 (AGLDK) and T80. K60 is a substrate binding site. Position 105–109 (105–109 (NRMGF)) interacts with substrate. FMN-binding residues include N133 and N166. N166 lines the substrate pocket. The active-site Nucleophile is S169. N171 is a binding site for substrate. 2 residues coordinate FMN: K211 and T239. A substrate-binding site is contributed by 240-241 (NT). FMN is bound by residues G262, G291, and 312-313 (YS).

Belongs to the dihydroorotate dehydrogenase family. Type 2 subfamily. Monomer. FMN is required as a cofactor.

The protein localises to the cell membrane. It catalyses the reaction (S)-dihydroorotate + a quinone = orotate + a quinol. Its pathway is pyrimidine metabolism; UMP biosynthesis via de novo pathway; orotate from (S)-dihydroorotate (quinone route): step 1/1. Its function is as follows. Catalyzes the conversion of dihydroorotate to orotate with quinone as electron acceptor. In Legionella pneumophila (strain Lens), this protein is Dihydroorotate dehydrogenase (quinone).